Here is a 112-residue protein sequence, read N- to C-terminus: DNA-binding protein TGAM_1196 (112 aa).

The protein belongs to the PDCD5 family.

This Thermococcus gammatolerans (strain DSM 15229 / JCM 11827 / EJ3) protein is DNA-binding protein TGAM_1196.